The chain runs to 249 residues: General transcription factor IIF subunit 2 (249 aa).

N-acetylalanine is present on alanine 2. N6-acetyllysine is present on residues lysine 22, lysine 33, and lysine 137. A Phosphoserine modification is found at serine 142. DNA-binding residues include glycine 227 and histidine 229. The residue at position 248 (serine 248) is a Phosphoserine.

It belongs to the TFIIF beta subunit family. As to quaternary structure, heterodimer of an alpha and a beta subunit. Interacts with HTATSF1 and GPBP1. Interacts with URI1. Interacts with GTF2B (via N-terminus); this interaction is inhibited in presence of GTF2F1. Part of TBP-based Pol II pre-initiation complex (PIC), in which Pol II core assembles with general transcription factors and other specific initiation factors including GTF2E1, GTF2E2, GTF2F1, GTF2F2, TCEA1, ERCC2, ERCC3, GTF2H2, GTF2H3, GTF2H4, GTF2H5, GTF2A1, GTF2A2, GTF2B and TBP; this large multi-subunit PIC complex mediates DNA unwinding and targets Pol II core to the transcription start site where the first phosphodiester bond forms.

The protein resides in the nucleus. Functionally, TFIIF is a general transcription initiation factor that binds to RNA polymerase II and helps to recruit it to the initiation complex in collaboration with TFIIB. It promotes transcription elongation. The protein is General transcription factor IIF subunit 2 (Gtf2f2) of Rattus norvegicus (Rat).